The sequence spans 321 residues: Cytochrome c biogenesis protein CcsA (321 aa).

A run of 8 helical transmembrane segments spans residues 17 to 37 (VVSIVIIIHFLTLLVNEFVGL), 48 to 68 (TFFCLTGLLITRWIYSGHLPI), 71 to 91 (LYESLIFLSWIFSIIHMVPYF), 98 to 118 (LSTITAPSTFFTQGFATWGLL), 143 to 163 (MVSGYAALLCGSLLSAALLVI), 225 to 245 (ILSIGFLFLTIGILSGAVWAN), 259 to 273 (TWAFITWTIFAIYFH), and 286 to 306 (AIVASIGFLIIWICYFGVNLL).

Belongs to the CcmF/CycK/Ccl1/NrfE/CcsA family. As to quaternary structure, may interact with Ccs1.

The protein localises to the plastid. The protein resides in the chloroplast thylakoid membrane. Required during biogenesis of c-type cytochromes (cytochrome c6 and cytochrome f) at the step of heme attachment. The sequence is that of Cytochrome c biogenesis protein CcsA from Populus alba (White poplar).